Reading from the N-terminus, the 430-residue chain is Serine--tRNA ligase (430 aa).

Residues 41-60 are disordered; the sequence is QSRTQDLQNERNVRSKSIGK. L-serine is bound at residue 236–238; that stretch reads TAE. An ATP-binding site is contributed by 267 to 269; that stretch reads RSE. L-serine is bound at residue E290. 354–357 serves as a coordination point for ATP; that stretch reads EISS. S390 contacts L-serine.

It belongs to the class-II aminoacyl-tRNA synthetase family. Type-1 seryl-tRNA synthetase subfamily. Homodimer. The tRNA molecule binds across the dimer.

It localises to the cytoplasm. It catalyses the reaction tRNA(Ser) + L-serine + ATP = L-seryl-tRNA(Ser) + AMP + diphosphate + H(+). The catalysed reaction is tRNA(Sec) + L-serine + ATP = L-seryl-tRNA(Sec) + AMP + diphosphate + H(+). Its pathway is aminoacyl-tRNA biosynthesis; selenocysteinyl-tRNA(Sec) biosynthesis; L-seryl-tRNA(Sec) from L-serine and tRNA(Sec): step 1/1. Catalyzes the attachment of serine to tRNA(Ser). Is also able to aminoacylate tRNA(Sec) with serine, to form the misacylated tRNA L-seryl-tRNA(Sec), which will be further converted into selenocysteinyl-tRNA(Sec). This chain is Serine--tRNA ligase, found in Alteromonas mediterranea (strain DSM 17117 / CIP 110805 / LMG 28347 / Deep ecotype).